We begin with the raw amino-acid sequence, 90 residues long: Large ribosomal subunit protein bL27 (90 aa).

A disordered region spans residues 1-21; that stretch reads MAHTKAGGTTRNSRDSAGRRL.

It belongs to the bacterial ribosomal protein bL27 family.

The chain is Large ribosomal subunit protein bL27 from Metamycoplasma arthritidis (strain 158L3-1) (Mycoplasma arthritidis).